We begin with the raw amino-acid sequence, 221 residues long: N-(5'-phosphoribosyl)anthranilate isomerase (221 aa).

Belongs to the TrpF family.

The enzyme catalyses N-(5-phospho-beta-D-ribosyl)anthranilate = 1-(2-carboxyphenylamino)-1-deoxy-D-ribulose 5-phosphate. It participates in amino-acid biosynthesis; L-tryptophan biosynthesis; L-tryptophan from chorismate: step 3/5. The protein is N-(5'-phosphoribosyl)anthranilate isomerase of Parabacteroides distasonis (strain ATCC 8503 / DSM 20701 / CIP 104284 / JCM 5825 / NCTC 11152).